A 265-amino-acid polypeptide reads, in one-letter code: Putative methyltransferase 235L (265 aa).

An N-terminal signal peptide occupies residues 1–17 (MDICICYFFTILTTISC).

It belongs to the methyltransferase superfamily.

The protein is Putative methyltransferase 235L of Acheta domesticus (House cricket).